A 165-amino-acid chain; its full sequence is Small ribosomal subunit protein uS5 (165 aa).

The S5 DRBM domain maps to 10–73; sequence QIEKLISLNR…TSARKNLRFV (64 aa).

It belongs to the universal ribosomal protein uS5 family. Part of the 30S ribosomal subunit. Contacts proteins S4 and S8.

In terms of biological role, with S4 and S12 plays an important role in translational accuracy. Functionally, located at the back of the 30S subunit body where it stabilizes the conformation of the head with respect to the body. The chain is Small ribosomal subunit protein uS5 from Borreliella burgdorferi (strain ATCC 35210 / DSM 4680 / CIP 102532 / B31) (Borrelia burgdorferi).